The sequence spans 280 residues: Extracellular metalloprotease GLRG_06286 (280 aa).

The N-terminal stretch at 1 to 17 (MQVTFTLVAALAGMASA) is a signal peptide. N-linked (GlcNAc...) asparagine glycosylation is present at N51. H196 serves as a coordination point for Zn(2+). E197 is an active-site residue. A Zn(2+)-binding site is contributed by H200. Residues 217 to 236 (DSIADTPAQSSPSSGCPVGR) are disordered. C232 and C259 are oxidised to a cystine.

The protein belongs to the peptidase M43B family.

It is found in the secreted. Its function is as follows. Secreted metalloproteinase that allows assimilation of proteinaceous substrates. In Colletotrichum graminicola (strain M1.001 / M2 / FGSC 10212) (Maize anthracnose fungus), this protein is Extracellular metalloprotease GLRG_06286.